The sequence spans 498 residues: Glycerol kinase (498 aa).

Threonine 12 contacts ADP. The ATP site is built by threonine 12, threonine 13, and serine 14. Threonine 12 is a binding site for sn-glycerol 3-phosphate. Arginine 16 provides a ligand contact to ADP. Positions 82, 83, 134, and 243 each coordinate sn-glycerol 3-phosphate. Glycerol contacts are provided by arginine 82, glutamate 83, tyrosine 134, aspartate 243, and glutamine 244. ADP-binding residues include threonine 265 and glycine 308. The ATP site is built by threonine 265, glycine 308, glutamine 312, and glycine 411. Glycine 411 serves as a coordination point for ADP.

It belongs to the FGGY kinase family.

The catalysed reaction is glycerol + ATP = sn-glycerol 3-phosphate + ADP + H(+). It participates in polyol metabolism; glycerol degradation via glycerol kinase pathway; sn-glycerol 3-phosphate from glycerol: step 1/1. With respect to regulation, inhibited by fructose 1,6-bisphosphate (FBP). Its function is as follows. Key enzyme in the regulation of glycerol uptake and metabolism. Catalyzes the phosphorylation of glycerol to yield sn-glycerol 3-phosphate. In Brucella canis (strain ATCC 23365 / NCTC 10854 / RM-666), this protein is Glycerol kinase.